Consider the following 173-residue polypeptide: Small ribosomal subunit protein uS5 (173 aa).

One can recognise an S5 DRBM domain in the interval 17-80; the sequence is LREKMIAVNR…EEARRNMVKV (64 aa).

It belongs to the universal ribosomal protein uS5 family. Part of the 30S ribosomal subunit. Contacts proteins S4 and S8.

Functionally, with S4 and S12 plays an important role in translational accuracy. Its function is as follows. Located at the back of the 30S subunit body where it stabilizes the conformation of the head with respect to the body. This chain is Small ribosomal subunit protein uS5, found in Acidovorax sp. (strain JS42).